The following is a 382-amino-acid chain: Anhydro-N-acetylmuramic acid kinase (382 aa).

22–29 is a binding site for ATP; the sequence is GTSMDGVD.

It belongs to the anhydro-N-acetylmuramic acid kinase family.

The enzyme catalyses 1,6-anhydro-N-acetyl-beta-muramate + ATP + H2O = N-acetyl-D-muramate 6-phosphate + ADP + H(+). It functions in the pathway amino-sugar metabolism; 1,6-anhydro-N-acetylmuramate degradation. The protein operates within cell wall biogenesis; peptidoglycan recycling. Catalyzes the specific phosphorylation of 1,6-anhydro-N-acetylmuramic acid (anhMurNAc) with the simultaneous cleavage of the 1,6-anhydro ring, generating MurNAc-6-P. Is required for the utilization of anhMurNAc either imported from the medium or derived from its own cell wall murein, and thus plays a role in cell wall recycling. The polypeptide is Anhydro-N-acetylmuramic acid kinase (Burkholderia orbicola (strain MC0-3)).